Here is a 229-residue protein sequence, read N- to C-terminus: MIRAIVTDIEGTTSDIRFVHNVLFPYARERLAAFVTAQQYAEPVKSILDNLRDEIAAPHATIGELVDALFTFMDEDRKSTALKALQGIIWQDGYVNGDFTGQLYPDVLPALEKWKAQGIDLYVYSSGSVAAQKLLFGYSDEGDITHLFSGYFDTRVGAKRDVQSYQNIAAQIGVSPSQILFLSDIHEELDAAEQAGFRTLQLIRGDDDGASHHHQVHQFDEINPEQIPS.

This sequence belongs to the HAD-like hydrolase superfamily. MasA/MtnC family. As to quaternary structure, monomer. Requires Mg(2+) as cofactor.

The enzyme catalyses 5-methylsulfanyl-2,3-dioxopentyl phosphate + H2O = 1,2-dihydroxy-5-(methylsulfanyl)pent-1-en-3-one + phosphate. Its pathway is amino-acid biosynthesis; L-methionine biosynthesis via salvage pathway; L-methionine from S-methyl-5-thio-alpha-D-ribose 1-phosphate: step 3/6. It functions in the pathway amino-acid biosynthesis; L-methionine biosynthesis via salvage pathway; L-methionine from S-methyl-5-thio-alpha-D-ribose 1-phosphate: step 4/6. In terms of biological role, bifunctional enzyme that catalyzes the enolization of 2,3-diketo-5-methylthiopentyl-1-phosphate (DK-MTP-1-P) into the intermediate 2-hydroxy-3-keto-5-methylthiopentenyl-1-phosphate (HK-MTPenyl-1-P), which is then dephosphorylated to form the acireductone 1,2-dihydroxy-3-keto-5-methylthiopentene (DHK-MTPene). This Enterobacter sp. (strain 638) protein is Enolase-phosphatase E1.